A 702-amino-acid chain; its full sequence is MPINKSEKPESCDNVKVVVRCRPLNEREKSMCYKQAVSVDEMRGTITVHKTDSSNEPPKTFTFDTVFGPESKQLDVYNLTARPIIDSVLEGYNGTIFAYGQTGTGKTFTMEGVRAIPELRGIIPNSFAHIFGHIAKAEGDTRFLVRVSYLEIYNEEVRDLLGKDQTQRLEVKERPDVGVYIKDLSAYVVNNADDMDRIMTLGHKNRSVGATNMNEHSSRSHAIFTITIECSEKGIDGNMHVRMGKLHLVDLAGSERQAKTGATGQRLKEATKINLSLSTLGNVISALVDGKSTHVPYRNSKLTRLLQDSLGGNSKTMMCANIGPADYNYDETISTLRYANRAKNIKNKARINEDPKDALLRQFQKEIEELKKKLEEGEEISGSDISGSEEDDDEEGEIGEDGEKRKKRRDQAGKKKVSPDKMIEMQAKIDEERKALETKLDMEEEERNKARAELEKREKDLLKAQQEHQSLLEKLSALEKKVIVGGVDLLAKAEEQEKLLEESNMELEERRKRAEQLRRELEEKEQERLDIEEKYTSLQEEAQGKTKKLKKVWTMLMAAKSEMADLQQEHQGEIEGLLENIRQLSRELRLQMLIIDNFIPRDYQEMIENYVHWNEDIGEWQLKCVAYTGNNMRKQTPVPDKKEKDPFEVDLSHVYLAYTEESLRQSLMKLERPRTSKGKARPKTGRRKRSAKPETVIDSLLQ.

Positions 14–345 (NVKVVVRCRP…LRYANRAKNI (332 aa)) constitute a Kinesin motor domain. 100-107 (GQTGTGKT) is an ATP binding site. A coiled-coil region spans residues 355 to 593 (PKDALLRQFQ…LSRELRLQML (239 aa)). 2 disordered regions span residues 372-424 (KKLE…KMIE) and 667-702 (LMKL…SLLQ). The span at 376 to 400 (EGEEISGSDISGSEEDDDEEGEIGE) shows a compositional bias: acidic residues. Basic and acidic residues predominate over residues 410 to 424 (DQAGKKKVSPDKMIE). The tract at residues 600–702 (PRDYQEMIEN…PETVIDSLLQ (103 aa)) is globular. Basic residues predominate over residues 675–690 (TSKGKARPKTGRRKRS). Ser690 bears the Phosphoserine mark.

Belongs to the TRAFAC class myosin-kinesin ATPase superfamily. Kinesin family. Kinesin II subfamily. In terms of assembly, heterodimer of KIF3A and KIF3B. Interacts with CIMAP3. Interacts with CLN3. Interacts with DCTN1. Interacts with FLCN. Interacts with AP3B1.

The protein resides in the cytoplasm. It is found in the cytoskeleton. It localises to the cell projection. The protein localises to the cilium. Its subcellular location is the microtubule organizing center. The protein resides in the centrosome. It is found in the centriole. Its function is as follows. Microtubule-based anterograde translocator for membranous organelles. Plus end-directed microtubule sliding activity in vitro. Plays a role in primary cilia formation. Plays a role in centriole cohesion and subdistal appendage organization and function. Regulates the formation of the subdistal appendage via recruitment of DCTN1 to the centriole. Also required for ciliary basal feet formation and microtubule anchoring to mother centriole. The polypeptide is Kinesin-like protein KIF3A (KIF3A) (Pongo abelii (Sumatran orangutan)).